The following is a 239-amino-acid chain: Orotidine 5'-phosphate decarboxylase (239 aa).

Residues Asp15, Lys37, 64–73 (DLKFHDIPNT), Thr126, Arg187, Gln196, Gly216, and Arg217 each bind substrate. Residue Lys66 is the Proton donor of the active site.

It belongs to the OMP decarboxylase family. Type 1 subfamily. In terms of assembly, homodimer.

It catalyses the reaction orotidine 5'-phosphate + H(+) = UMP + CO2. Its pathway is pyrimidine metabolism; UMP biosynthesis via de novo pathway; UMP from orotate: step 2/2. In terms of biological role, catalyzes the decarboxylation of orotidine 5'-monophosphate (OMP) to uridine 5'-monophosphate (UMP). This is Orotidine 5'-phosphate decarboxylase from Geobacter sulfurreducens (strain ATCC 51573 / DSM 12127 / PCA).